Here is a 722-residue protein sequence, read N- to C-terminus: Zinc finger protein 600 (722 aa).

The C2H2-type 1; degenerate zinc finger occupies 162-184; it reads FQCNESGKAFNCSSLLRKHQIPH. 9 consecutive C2H2-type zinc fingers follow at residues 190 to 212, 218 to 240, 246 to 268, 274 to 296, 302 to 324, 330 to 352, 358 to 380, 386 to 408, and 414 to 436; these read YKCD…CRCH, YKCN…RRLH, HKCN…KAIH, YKCN…RRIH, YKCE…KRIH, YKCK…KRIH, YKCN…HRLH, YKCK…TRIH, and YKCN…KSIH. Residues 442 to 464 form a C2H2-type 11; degenerate zinc finger; sequence YKYEECEKVFSCGSTLETHKIIH. 9 consecutive C2H2-type zinc fingers follow at residues 470–492, 498–520, 526–548, 554–576, 582–604, 610–632, 638–660, 666–688, and 694–716; these read YKCK…TRIH, YKCN…RRVH, YKCN…RRLH, YKCT…TRIH, YKCN…HRIH, YKCE…RRIH, YKCK…TGLH, and YKCN…QAVH.

The protein belongs to the krueppel C2H2-type zinc-finger protein family.

The protein resides in the nucleus. Functionally, may be involved in transcriptional regulation. This Homo sapiens (Human) protein is Zinc finger protein 600 (ZNF600).